The chain runs to 494 residues: MGSTSSLYAAIDLGSNSFHMLVVREVAGSIQTLTRIKRKVRLAAGLNSENDLSNEAMERGWQCLRLFAERLQDIPPSQIRVVATATLRLAVNAGDFIAKAQEILGCPVQVISGEEEARLIYQGVAHTTGGADQRLVVDIGGASTELVTGTGAQTTSLFSLSMGCVTWLERYFADRNLGQENFDAAEKAAREVLRPVADELRYHGWKVCVGASGTVQALQEIMMAQGMDERITLEKLQQLKQRAIHCGRLEELEIDGLTLERALVFPSGLAILIAIFTELNIQCMTLAGGALREGLVYGMLHLAVEQDIRSRTLRNIQRRFMIDIDQAQRVAKVAANFFDQVENEWHLEAISRDLLISACQLHEIGLSVDFKQAPQHAAYLVRNLDLPGFTPAQKKLLATLLLNQTNPVDLSSLHQQNAVPPRVAEQLCRLLRLAIIFASRRRDDLVPEMTLQANHELLTLTLPQGWLTQHPLGKEIIAQENQWQSYVHWPLEVH.

The protein belongs to the GppA/Ppx family. GppA subfamily.

The catalysed reaction is guanosine 3'-diphosphate 5'-triphosphate + H2O = guanosine 3',5'-bis(diphosphate) + phosphate + H(+). Its pathway is purine metabolism; ppGpp biosynthesis; ppGpp from GTP: step 2/2. Functionally, catalyzes the conversion of pppGpp to ppGpp. Guanosine pentaphosphate (pppGpp) is a cytoplasmic signaling molecule which together with ppGpp controls the 'stringent response', an adaptive process that allows bacteria to respond to amino acid starvation, resulting in the coordinated regulation of numerous cellular activities. The polypeptide is Guanosine-5'-triphosphate,3'-diphosphate pyrophosphatase (Shigella flexneri).